Here is a 63-residue protein sequence, read N- to C-terminus: uncharacterized protein (63 aa).

The first 21 residues, 1 to 21 (MNRALILTFVLFFALFAISSA), serve as a signal peptide directing secretion.

This is an uncharacterized protein from Dictyostelium discoideum (Social amoeba).